Consider the following 415-residue polypeptide: Small RNA 2'-O-methyltransferase (415 aa).

The S-adenosyl-L-methionine site is built by serine 99 and aspartate 117. Mg(2+)-binding residues include glutamate 169, glutamate 172, and histidine 173.

It belongs to the methyltransferase superfamily. HEN1 family. Mg(2+) serves as cofactor.

Its subcellular location is the cytoplasm. It catalyses the reaction small RNA 3'-end nucleotide + S-adenosyl-L-methionine = small RNA 3'-end 2'-O-methylnucleotide + S-adenosyl-L-homocysteine + H(+). Methyltransferase that adds a 2'-O-methyl group at the 3'-end of piRNAs, a class of 24 to 30 nucleotide RNAs that are generated by a Dicer-independent mechanism and are primarily derived from transposons and other repeated sequence elements. This probably protects the 3'-end of piRNAs from uridylation activity and subsequent degradation. Stabilization of piRNAs is essential for gametogenesis. This chain is Small RNA 2'-O-methyltransferase, found in Bombyx mori (Silk moth).